We begin with the raw amino-acid sequence, 300 residues long: MSVSRLFSNPKFVYPLVGATIGSIGLAYYSTQAQFYIANETGKTFTGGDQWIDLKLKKSEDLTHNTKHLTFELLNPDDVSGLITASMLMTKYVTPKGNNVIRPYTPVSDPDQKGTLDFVIKRYENGKMSNHIHNLKEGETLSFKGPVVKWKWEPNQFKSIALIGGGTGITPLYQLLREITSNPEDKTKVSLIYGNTSPEDVLIKDRIDDIAAKHKDQVKVTYFVDENKATKDWEGEVGFITKEFLEKELDKPSPDFKIFVCGPPGLYKAISGVKVSPTDQGEVEGALKDLGFSKEHVFKF.

A helical membrane pass occupies residues 12–29 (FVYPLVGATIGSIGLAYY). The region spanning 49-153 (DQWIDLKLKK…KGPVVKWKWE (105 aa)) is the FAD-binding FR-type domain. 156–191 (QFKSIALIGGGTGITPLYQLLREITSNPEDKTKVSL) serves as a coordination point for FAD.

The protein belongs to the flavoprotein pyridine nucleotide cytochrome reductase family. FAD serves as cofactor.

It localises to the mitochondrion outer membrane. It catalyses the reaction 2 Fe(III)-[cytochrome b5] + NADH = 2 Fe(II)-[cytochrome b5] + NAD(+) + H(+). May mediate the reduction of outer membrane cytochrome b5. The sequence is that of NADH-cytochrome b5 reductase 2 (MCR1) from Lodderomyces elongisporus (strain ATCC 11503 / CBS 2605 / JCM 1781 / NBRC 1676 / NRRL YB-4239) (Yeast).